Reading from the N-terminus, the 327-residue chain is Interleukin-12 subunit beta (327 aa).

A signal peptide spans 1–22; sequence MHPQQLVVSWFSLVLLASPIVA. One can recognise an Ig-like C2-type domain in the interval 23–106; that stretch reads IWELEKNVYV…LSRSLLLLHK (84 aa). A disulfide bond links C50 and C90. The N-linked (GlcNAc...) asparagine glycan is linked to N223. Positions 238 to 327 constitute a Fibronectin type-III domain; the sequence is PPKNLQLRPL…WSEWASVSCS (90 aa).

The protein belongs to the IL-12B family. Heterodimer with IL12A; disulfide-linked. The heterodimer is known as interleukin IL-12. Heterodimer with IL23A; disulfide-linked. The heterodimer is known as interleukin IL-23. Also secreted as a monomer. Interacts with NBR1; this interaction promotes IL-12 secretion.

The protein localises to the secreted. Its function is as follows. Cytokine that can act as a growth factor for activated T and NK cells, enhance the lytic activity of NK/lymphokine-activated killer cells, and stimulate the production of IFN-gamma by resting PBMC. Functionally, associates with IL23A to form the IL-23 interleukin, a heterodimeric cytokine which functions in innate and adaptive immunity. IL-23 may constitute with IL-17 an acute response to infection in peripheral tissues. IL-23 binds to a heterodimeric receptor complex composed of IL12RB1 and IL23R, activates the Jak-Stat signaling cascade, stimulates memory rather than naive T-cells and promotes production of pro-inflammatory cytokines. IL-23 induces autoimmune inflammation and thus may be responsible for autoimmune inflammatory diseases and may be important for tumorigenesis. In Capra hircus (Goat), this protein is Interleukin-12 subunit beta (IL12B).